The following is a 441-amino-acid chain: RNA-binding protein BRN1 (441 aa).

RRM domains are found at residues 18–99 (VKLF…YADG) and 106–186 (HKLF…WADT). Polar residues predominate over residues 258–273 (QPNQGNNNALQGTSPD). The interval 258-282 (QPNQGNNNALQGTSPDSVPPRLARR) is disordered. One can recognise an RRM 3 domain in the interval 349-427 (ANLFIYNIPR…KKLKVQLKRD (79 aa)).

Highly expressed in stems and cauline leaves, and at lower levels in siliques, flowers, roots and rosette leaves.

Its subcellular location is the cytoplasm. Functionally, RNA-binding protein involved in the regulation of flowering time. Acts as a repressor of the activity of SOC1, a transcriptional activator of flowering time. Binds to the 3'-UTR of SOC1 mRNA in the cytoplasm and participates in SOC1 mRNA decay, mediated by the distal region of the SOC1 3'-UTR. Acts as a positive regulator of salicylic acid (SA)-mediated immunity. May act on SA signaling-related genes at a post-transcriptional level. This is RNA-binding protein BRN1 from Arabidopsis thaliana (Mouse-ear cress).